The sequence spans 317 residues: Signal recognition particle receptor FtsY (317 aa).

Residues 117-124, 199-203, and 263-266 each bind GTP; these read GVNGVGKT, DTAGR, and TKLD.

This sequence belongs to the GTP-binding SRP family. FtsY subfamily. In terms of assembly, part of the signal recognition particle protein translocation system, which is composed of SRP and FtsY.

It is found in the cell membrane. The protein resides in the cytoplasm. The enzyme catalyses GTP + H2O = GDP + phosphate + H(+). Functionally, involved in targeting and insertion of nascent membrane proteins into the cytoplasmic membrane. Acts as a receptor for the complex formed by the signal recognition particle (SRP) and the ribosome-nascent chain (RNC). The chain is Signal recognition particle receptor FtsY from Deinococcus radiodurans (strain ATCC 13939 / DSM 20539 / JCM 16871 / CCUG 27074 / LMG 4051 / NBRC 15346 / NCIMB 9279 / VKM B-1422 / R1).